The sequence spans 252 residues: tRNA (guanine-N(1)-)-methyltransferase (252 aa).

Residues Gly-113 and 133-138 (IGDYVL) each bind S-adenosyl-L-methionine. The segment covering 229 to 238 (VARPAANAPA) has biased composition (low complexity). A disordered region spans residues 229 to 252 (VARPAANAPAKGESQKTPKNKTDG). Residues 241-252 (ESQKTPKNKTDG) show a composition bias toward basic and acidic residues.

The protein belongs to the RNA methyltransferase TrmD family. In terms of assembly, homodimer.

It localises to the cytoplasm. It catalyses the reaction guanosine(37) in tRNA + S-adenosyl-L-methionine = N(1)-methylguanosine(37) in tRNA + S-adenosyl-L-homocysteine + H(+). Functionally, specifically methylates guanosine-37 in various tRNAs. This Rhodopseudomonas palustris (strain HaA2) protein is tRNA (guanine-N(1)-)-methyltransferase.